The primary structure comprises 184 residues: UPF0149 protein PSEEN5316 (184 aa).

Belongs to the UPF0149 family.

This is UPF0149 protein PSEEN5316 from Pseudomonas entomophila (strain L48).